The following is a 411-amino-acid chain: Adenylosuccinate synthetase (411 aa).

GTP is bound by residues 11 to 17 (GDEGKGK) and 39 to 41 (GHT). Asp-12 (proton acceptor) is an active-site residue. Positions 12 and 39 each coordinate Mg(2+). IMP-binding positions include 12 to 15 (DEGK), 37 to 40 (NAGH), Thr-121, Arg-135, Gln-215, Thr-230, and Arg-294. Catalysis depends on His-40, which acts as the Proton donor. 290 to 296 (TTTKRPR) is a substrate binding site. Residues Arg-296, 322–324 (KLD), and 400–402 (STS) each bind GTP.

The protein belongs to the adenylosuccinate synthetase family. As to quaternary structure, homodimer. Mg(2+) is required as a cofactor.

It localises to the cytoplasm. It carries out the reaction IMP + L-aspartate + GTP = N(6)-(1,2-dicarboxyethyl)-AMP + GDP + phosphate + 2 H(+). The protein operates within purine metabolism; AMP biosynthesis via de novo pathway; AMP from IMP: step 1/2. Functionally, plays an important role in the de novo pathway of purine nucleotide biosynthesis. Catalyzes the first committed step in the biosynthesis of AMP from IMP. The protein is Adenylosuccinate synthetase of Helicobacter pylori (strain P12).